A 295-amino-acid polypeptide reads, in one-letter code: MAKYTEDQLTSWTKPPSDSEQTKLENSEKMVREAISSDEKLSKKTIETFGQGSYANNTNVRLNSDIDINVKYSDGFYFDLPKDKSREDFGITLTSYSYEEYKDDVENALVNKFGRSEVVRKDKCITVKENSYRVETDVVPTWDYRRYSENGNYVQGTKFKTDKGIWIDNYPKQHIANGISKNNNTARRFKRLTRLHRKLRYKMIDDGGNVSDNITSFLLECLVWNVPNRIMNDYDTWTERLKQSIIYLYNNTREESSCKEWGEVSELLYLFHGGRKWTSKDVNSYMVLLWNHLEF.

The segment at 1–28 is disordered; sequence MAKYTEDQLTSWTKPPSDSEQTKLENSE. The span at 7–19 shows a compositional bias: polar residues; sequence DQLTSWTKPPSDS. Residues Gln51 and Ser53 each contribute to the UTP site. Asp67 provides a ligand contact to Mg(2+). Positions 123, 169, 197, 217, and 276 each coordinate UTP. A Pyrimidine specificity motif (R/Q)xW in donor pocket motif is present at residues 275 to 277; sequence RKW.

This sequence belongs to the CD-NTase family. E02 subfamily. Monomer. Mg(2+) serves as cofactor.

It carries out the reaction 2 UTP = c-di-UMP + 2 diphosphate. The catalysed reaction is UTP + CTP = cyclic CMP-UMP + 2 diphosphate. Cyclic nucleotide synthase (second messenger synthase) of a CBASS antivirus system. CBASS (cyclic oligonucleotide-based antiphage signaling system) provides immunity against bacteriophage. The CD-NTase protein synthesizes cyclic nucleotides in response to infection; these serve as specific second messenger signals. The signals activate a diverse range of effectors, leading to bacterial cell death and thus abortive phage infection. A type I-B(UU) CBASS system. This Cecembia lonarensis (strain CCUG 58316 / KCTC 22772 / LW9) protein is Cyclic dipyrimidine nucleotide synthase CdnE.